The following is a 102-amino-acid chain: Acylphosphatase 1 (102 aa).

In terms of domain architecture, Acylphosphatase-like spans 12–100 (TRLVRVRGRV…PRFDRFEQLP (89 aa)). Residues Arg-27 and Asn-45 contribute to the active site.

The protein belongs to the acylphosphatase family.

It carries out the reaction an acyl phosphate + H2O = a carboxylate + phosphate + H(+). The chain is Acylphosphatase 1 (acyP1) from Ralstonia nicotianae (strain ATCC BAA-1114 / GMI1000) (Ralstonia solanacearum).